Here is a 192-residue protein sequence, read N- to C-terminus: UPF0312 protein Pput_4854 (192 aa).

Positions 1-23 (MLKKTFAALALGTALLSAGQAMA) are cleaved as a signal peptide.

It belongs to the UPF0312 family. Type 1 subfamily.

Its subcellular location is the periplasm. The sequence is that of UPF0312 protein Pput_4854 from Pseudomonas putida (strain ATCC 700007 / DSM 6899 / JCM 31910 / BCRC 17059 / LMG 24140 / F1).